The chain runs to 131 residues: Global transcriptional regulator Spx 2 (131 aa).

The cysteines at positions 10 and 13 are disulfide-linked.

The protein belongs to the ArsC family. Spx subfamily. Interacts with the C-terminal domain of the alpha subunit of the RNAP.

The protein resides in the cytoplasm. Its function is as follows. Global transcriptional regulator that plays a key role in stress response and exerts either positive or negative regulation of genes. Acts by interacting with the C-terminal domain of the alpha subunit of the RNA polymerase (RNAP). This interaction can enhance binding of RNAP to the promoter region of target genes and stimulate their transcription, or block interaction of RNAP with activator. The chain is Global transcriptional regulator Spx 2 from Bacillus cereus (strain ATCC 14579 / DSM 31 / CCUG 7414 / JCM 2152 / NBRC 15305 / NCIMB 9373 / NCTC 2599 / NRRL B-3711).